A 322-amino-acid polypeptide reads, in one-letter code: Cysteine protease YopT (322 aa).

Catalysis depends on residues cysteine 139, histidine 258, and aspartate 274.

It belongs to the peptidase C58 family. Interacts with human ARHA.

It is found in the secreted. Functionally, cysteine protease, which is translocated into infected cells and plays a central role in pathogenesis by cleaving the C-terminus end of the human small GTPase RhoA/ARHA, a regulator of cytoskeleton. Once cleaved, ARHA loses its lipid modification, and is released from the cell membrane, leading to the subsequent disruption of actin cytoskeleton of the host cell. The sequence is that of Cysteine protease YopT (yopT) from Yersinia pestis.